We begin with the raw amino-acid sequence, 420 residues long: L-rhamnose isomerase (420 aa).

Positions 264, 296, and 298 each coordinate Mn(2+).

This sequence belongs to the rhamnose isomerase family. Mn(2+) serves as cofactor.

It localises to the cytoplasm. It carries out the reaction L-rhamnopyranose = L-rhamnulose. The protein operates within carbohydrate degradation; L-rhamnose degradation; glycerone phosphate from L-rhamnose: step 1/3. Functionally, catalyzes the interconversion of L-rhamnose and L-rhamnulose. This is L-rhamnose isomerase from Listeria monocytogenes serovar 1/2a (strain ATCC BAA-679 / EGD-e).